Consider the following 454-residue polypeptide: Kynurenine--oxoglutarate transaminase 3 (454 aa).

The residue at position 2 (F2) is an N-acetylserine. Residue G71 coordinates substrate. K116 is modified (N6-acetyllysine; alternate). N6-succinyllysine; alternate is present on K116. Substrate is bound at residue N218. At K280 the chain carries N6-(pyridoxal phosphate)lysine. R429 contacts substrate.

This sequence belongs to the class-I pyridoxal-phosphate-dependent aminotransferase family. Homodimer. It depends on pyridoxal 5'-phosphate as a cofactor.

It catalyses the reaction L-kynurenine + 2-oxoglutarate = kynurenate + L-glutamate + H2O. It carries out the reaction L-kynurenine + glyoxylate = kynurenate + glycine + H2O. The enzyme catalyses 3-hydroxy-L-kynurenine + glyoxylate = xanthurenate + glycine + H2O. The catalysed reaction is an S-substituted L-cysteine + H2O = a thiol + pyruvate + NH4(+). It participates in amino-acid degradation; L-kynurenine degradation; kynurenate from L-kynurenine: step 1/2. Functionally, catalyzes the irreversible transamination of the L-tryptophan metabolite L-kynurenine to form kynurenic acid (KA), an intermediate in the tryptophan catabolic pathway which is also a broad spectrum antagonist of the three ionotropic excitatory amino acid receptors among others. May catalyze the beta-elimination of S-conjugates and Se-conjugates of L-(seleno)cysteine, resulting in the cleavage of the C-S or C-Se bond. Has transaminase activity towards L-kynurenine, tryptophan, phenylalanine, serine, cysteine, methionine, histidine, glutamine and asparagine with glyoxylate as an amino group acceptor (in vitro). Has lower activity with 2-oxoglutarate as amino group acceptor (in vitro). This Homo sapiens (Human) protein is Kynurenine--oxoglutarate transaminase 3.